A 235-amino-acid chain; its full sequence is MEKRELLYEGKAKKVYKTDEENLYIIEYKDDATAFNGLKKGTIAEKGIVNNKVSAILFALLDKNNVPTHYVKRLSDREMLVKKVEIFPLEVIVRNYAAGSICKRLGLEEGLKFKTPVLEFSYKNDELKDPMINEYHIQALELATKEEIEIMTGMTFKVNEILSEYFLSKDIILVDFKLEFGKSSEGILLADEISPDTCRFWDKNTMEKLDKDRFRKDLGKVEEAYLEILKRLGGM.

It belongs to the SAICAR synthetase family.

It carries out the reaction 5-amino-1-(5-phospho-D-ribosyl)imidazole-4-carboxylate + L-aspartate + ATP = (2S)-2-[5-amino-1-(5-phospho-beta-D-ribosyl)imidazole-4-carboxamido]succinate + ADP + phosphate + 2 H(+). It functions in the pathway purine metabolism; IMP biosynthesis via de novo pathway; 5-amino-1-(5-phospho-D-ribosyl)imidazole-4-carboxamide from 5-amino-1-(5-phospho-D-ribosyl)imidazole-4-carboxylate: step 1/2. This chain is Phosphoribosylaminoimidazole-succinocarboxamide synthase, found in Thermoanaerobacter pseudethanolicus (strain ATCC 33223 / 39E) (Clostridium thermohydrosulfuricum).